Consider the following 244-residue polypeptide: Small ribosomal subunit protein uS2 (244 aa).

Belongs to the universal ribosomal protein uS2 family.

The sequence is that of Small ribosomal subunit protein uS2 from Hydrogenovibrio crunogenus (strain DSM 25203 / XCL-2) (Thiomicrospira crunogena).